A 215-amino-acid chain; its full sequence is Thiamine-phosphate synthase (215 aa).

Residues 43–47 (QLRDK) and N75 each bind 4-amino-2-methyl-5-(diphosphooxymethyl)pyrimidine. 2 residues coordinate Mg(2+): D76 and D95. Residue S114 coordinates 4-amino-2-methyl-5-(diphosphooxymethyl)pyrimidine. 141-143 (TPT) contacts 2-[(2R,5Z)-2-carboxy-4-methylthiazol-5(2H)-ylidene]ethyl phosphate. K144 provides a ligand contact to 4-amino-2-methyl-5-(diphosphooxymethyl)pyrimidine. Residue G172 participates in 2-[(2R,5Z)-2-carboxy-4-methylthiazol-5(2H)-ylidene]ethyl phosphate binding.

It belongs to the thiamine-phosphate synthase family. The cofactor is Mg(2+).

The catalysed reaction is 2-[(2R,5Z)-2-carboxy-4-methylthiazol-5(2H)-ylidene]ethyl phosphate + 4-amino-2-methyl-5-(diphosphooxymethyl)pyrimidine + 2 H(+) = thiamine phosphate + CO2 + diphosphate. It catalyses the reaction 2-(2-carboxy-4-methylthiazol-5-yl)ethyl phosphate + 4-amino-2-methyl-5-(diphosphooxymethyl)pyrimidine + 2 H(+) = thiamine phosphate + CO2 + diphosphate. The enzyme catalyses 4-methyl-5-(2-phosphooxyethyl)-thiazole + 4-amino-2-methyl-5-(diphosphooxymethyl)pyrimidine + H(+) = thiamine phosphate + diphosphate. The protein operates within cofactor biosynthesis; thiamine diphosphate biosynthesis; thiamine phosphate from 4-amino-2-methyl-5-diphosphomethylpyrimidine and 4-methyl-5-(2-phosphoethyl)-thiazole: step 1/1. Condenses 4-methyl-5-(beta-hydroxyethyl)thiazole monophosphate (THZ-P) and 2-methyl-4-amino-5-hydroxymethyl pyrimidine pyrophosphate (HMP-PP) to form thiamine monophosphate (TMP). This Streptomyces avermitilis (strain ATCC 31267 / DSM 46492 / JCM 5070 / NBRC 14893 / NCIMB 12804 / NRRL 8165 / MA-4680) protein is Thiamine-phosphate synthase.